Here is a 380-residue protein sequence, read N- to C-terminus: Protein kinase ORF15 (380 aa).

In terms of domain architecture, Protein kinase spans 93-371; that stretch reads FIPVKVAGCL…LLIAQLTKFI (279 aa). Lysine 118 serves as a coordination point for ATP. Aspartate 217 functions as the Proton acceptor in the catalytic mechanism.

The protein belongs to the protein kinase superfamily. Ser/Thr protein kinase family.

The catalysed reaction is L-seryl-[protein] + ATP = O-phospho-L-seryl-[protein] + ADP + H(+). It carries out the reaction L-threonyl-[protein] + ATP = O-phospho-L-threonyl-[protein] + ADP + H(+). This chain is Protein kinase ORF15 (ORF15), found in Ictalurid herpesvirus 1 (strain Auburn) (IcHV-1).